Here is a 72-residue protein sequence, read N- to C-terminus: Exodeoxyribonuclease 7 small subunit (72 aa).

This sequence belongs to the XseB family. As to quaternary structure, heterooligomer composed of large and small subunits.

Its subcellular location is the cytoplasm. It catalyses the reaction Exonucleolytic cleavage in either 5'- to 3'- or 3'- to 5'-direction to yield nucleoside 5'-phosphates.. Its function is as follows. Bidirectionally degrades single-stranded DNA into large acid-insoluble oligonucleotides, which are then degraded further into small acid-soluble oligonucleotides. This chain is Exodeoxyribonuclease 7 small subunit, found in Chlamydia trachomatis serovar A (strain ATCC VR-571B / DSM 19440 / HAR-13).